An 89-amino-acid chain; its full sequence is Nitrogen regulatory protein (89 aa).

The PTS EIIA type-2 domain maps to 6–89 (TILTPGRSLV…ALLHLEAPID (84 aa)). Histidine 68 acts as the Tele-phosphohistidine intermediate in catalysis.

The protein resides in the cytoplasm. In terms of biological role, seems to have a role in regulating nitrogen assimilation. The sequence is that of Nitrogen regulatory protein (ptsN) from Pseudomonas putida (Arthrobacter siderocapsulatus).